The chain runs to 1764 residues: MRAPTTVRCSGRIQRARWRGFLPLVLALLMGTSHAQRDSVGRYEPASRDANRLWRPVGNHPAAAAAKVYSLFREPDAPVPGLSPSEWNQPGQGIPGRLAEAEARRPSRAQQLRRVQSPVQTRRSNPRGQQPPAARTAHSVVRLATPQRPAAARRGRLTGRNVCGGQCCPGWTTSNSTNHCIKPVCQPPCQNRGSCSRPQLCICRSGFRGARCEEVIPEEEFDPQNARPVPRRSVEGAPGPHRSSEARGSLVTRIQPLLPPLPPPPSRTLSQTRPLQQHAGLSRTVRRYPATGTNGQLMSNALPSGPGPELRDSSQQAAHMNHLSHPWGLNLTEKIKKIKVVFTPTICKQTCARGRCANTCEKGDTTTLYSQGGHGHDPKSGFRIYFCQIPCLNGGRCIGRDECWCPANSTGKFCHLPVPQPDREPPGRGSQHRALLEGPLKQSTFTLPLSNQLASVNPSLVKVQMQHPPEASVQIHQVARVRGEVDPVPEDNSVETRASHRPHGSSGHSHWASNSIPARAGEAPRPPPVPSRHYGLLGQCYLSTVNGQCANPLGELTSQEDCCGSVGTSWGVTSCAPCPPRPAFPVIENGQLECPQGYKRLNLSHCQDINECLTLGLCKDSECVNTRGSYLCTCRPGLMLDPSRSRCVSDKAVSMKQGLCYRSMVSGTCTLPLVQRITKQICCCSRVGKAWGSKCEHCPLPGTEAFREICPAGHGYAYSSSDIRLSMRKAEEEELASPVREQRQQSSGPPPGAAERQPLRAATATWIEAETLPDKGDSRAIQITTSAPHLPARVPGDATGRPTPSLPGQGIPEGPAEEQVIPSSDVLVTHGPPGFDPCFAGASNICGPGTCVKLPNGYRCVCSPGYQLHPSQDYCTDDNECLRNPCEGRGRCVNSVGSYSCLCYPGYTLATLGDTQECQDVDECEQPGVCSGGRCSNTEGSYHCECDQGYVMVRRGHCQDINECRHPGTCPDGRCVNSPGSYTCLACEEGYIGQSGNCVDMNECLTPGICAHGRCINMEGSFRCSCEPGYELTPDKKGCRDVDECASRASCPTGLCLNTEGSFTCSACQSGYWVNEDGTACEDLDECAFPGVCPTGVCTNTVGSFSCKDCDRGFRPSPLGNSCEDVDECEGPQNSCLGGECKNTDGSYQCLCPQGFQLANGTVCEDVDECVGEEHCAPHGECLNSPGSFFCLCAPGFASAEGGTRCQDVDECATTEPCLGGHCVNTEGSFNCLCETGFQPAPDSGECVDIDECANDTVCGNHGFCDNTDGSFRCLCDQGFETSPSGWECVDVNECELMLAVCGDALCENVEGSFLCLCASDLEEYDAEEGHCRPRVAGAQRIPEVPTEEQAAGLTGMECYAEHNGGPPCSQILGQNSTQAECCSTQGARWGETCDPCPSEDSVEFSELCPSGQGYIPVEGAWTFGQAMYTDADECILFGPALCQNGRCLNTVPGYICLCNPGYHYDAVSRKCQDHNECQDLACENGECVNTEGSFHCFCSPPLILDLSGQRCVNSTSSSEDFPDHDIHMDICWKKVTNDVCSQPLRGHHTTYTECCCQDGEAWSQQCALCPPRSSEVYAQLCNVARIEAEREAGIHFRPGYEYGPGPDDLPETLYGPDGAPFYNYLGPEDTVPEPPFSNTASHLGDNTPILEPPLQPSELQPPAIQNPLASFEGLQAEECGILNGCENGRCVRVREGYTCDCFEGFQLDTALMACVDVNECEDLNGAARLCAHGHCENTEGSYRCHCSPGYVAEPGPPHCAAKE.

Residues 1-35 (MRAPTTVRCSGRIQRARWRGFLPLVLALLMGTSHA) form the signal peptide. Residues 80 to 140 (PGLSPSEWNQ…PPAARTAHSV (61 aa)) are disordered. Residues 94-115 (IPGRLAEAEARRPSRAQQLRRV) are heparin-binding. The span at 108–128 (RAQQLRRVQSPVQTRRSNPRG) shows a compositional bias: polar residues. Residue Asn175 is glycosylated (N-linked (GlcNAc...) asparagine). The EGF-like 1 domain occupies 181–213 (IKPVCQPPCQNRGSCSRPQLCICRSGFRGARCE). Cystine bridges form between Cys185/Cys195, Cys189/Cys201, and Cys203/Cys212. Positions 220–279 (EFDPQNARPVPRRSVEGAPGPHRSSEARGSLVTRIQPLLPPLPPPPSRTLSQTRPLQQHA) are disordered. Positions 226–243 (ARPVPRRSVEGAPGPHRS) are heparin-binding. Pro residues predominate over residues 257–266 (LLPPLPPPPS). N-linked (GlcNAc...) asparagine glycosylation is present at Asn330. Residue 331-341 (LTEKIKKIKVV) coordinates heparin. One can recognise an EGF-like 2 domain in the interval 383 to 415 (RIYFCQIPCLNGGRCIGRDECWCPANSTGKFCH). 3 disulfides stabilise this stretch: Cys387-Cys397, Cys391-Cys403, and Cys405-Cys414. The N-linked (GlcNAc...) asparagine glycan is linked to Asn408. Residues 484–529 (EVDPVPEDNSVETRASHRPHGSSGHSHWASNSIPARAGEAPRPPPV) form a disordered region. Ser493 is modified (phosphoserine). The TB 1 domain maps to 538–590 (GQCYLSTVNGQCANPLGELTSQEDCCGSVGTSWGVTSCAPCPPRPAFPVIENG). 3 disulfides stabilise this stretch: Cys540-Cys562, Cys549-Cys575, and Cys563-Cys578. A glycan (N-linked (GlcNAc...) asparagine) is linked at Asn602. One can recognise an EGF-like 3; calcium-binding domain in the interval 608-648 (DINECLTLGLCKDSECVNTRGSYLCTCRPGLMLDPSRSRCV). 7 cysteine pairs are disulfide-bonded: Cys612-Cys623, Cys618-Cys632, Cys634-Cys647, Cys660-Cys682, Cys669-Cys695, Cys683-Cys698, and Cys684-Cys710. A TB 2 domain is found at 658–710 (GLCYRSMVSGTCTLPLVQRITKQICCCSRVGKAWGSKCEHCPLPGTEAFREIC). 2 disordered regions span residues 729-759 (KAEEEELASPVREQRQQSSGPPPGAAERQPL) and 786-809 (SAPHLPARVPGDATGRPTPSLPGQ). Residues 834–876 (GFDPCFAGASNICGPGTCVKLPNGYRCVCSPGYQLHPSQDYCT) enclose the EGF-like 4 domain. 45 disulfide bridges follow: Cys838/Cys851, Cys846/Cys860, Cys862/Cys875, Cys881/Cys892, Cys886/Cys901, Cys903/Cys918, Cys924/Cys935, Cys930/Cys944, Cys946/Cys958, Cys964/Cys975, Cys970/Cys984, Cys987/Cys998, Cys1004/Cys1015, Cys1010/Cys1024, Cys1026/Cys1039, Cys1045/Cys1056, Cys1051/Cys1065, Cys1068/Cys1081, Cys1087/Cys1098, Cys1093/Cys1107, Cys1110/Cys1123, Cys1129/Cys1141, Cys1136/Cys1150, Cys1152/Cys1164, Cys1170/Cys1182, Cys1176/Cys1191, Cys1193/Cys1206, Cys1212/Cys1223, Cys1218/Cys1232, Cys1234/Cys1247, Cys1253/Cys1265, Cys1259/Cys1274, Cys1276/Cys1289, Cys1295/Cys1307, Cys1302/Cys1316, Cys1318/Cys1332, Cys1359/Cys1382, Cys1369/Cys1394, Cys1383/Cys1397, Cys1435/Cys1448, Cys1443/Cys1457, Cys1459/Cys1472, Cys1478/Cys1488, Cys1483/Cys1497, and Cys1499/Cys1512. One can recognise an EGF-like 5; calcium-binding domain in the interval 877–919 (DDNECLRNPCEGRGRCVNSVGSYSCLCYPGYTLATLGDTQECQ). Residues 920 to 959 (DVDECEQPGVCSGGRCSNTEGSYHCECDQGYVMVRRGHCQ) form the EGF-like 6; calcium-binding domain. The EGF-like 7; calcium-binding domain maps to 960–999 (DINECRHPGTCPDGRCVNSPGSYTCLACEEGYIGQSGNCV). Residues 1000-1040 (DMNECLTPGICAHGRCINMEGSFRCSCEPGYELTPDKKGCR) enclose the EGF-like 8; calcium-binding domain. The EGF-like 9; calcium-binding domain occupies 1041–1082 (DVDECASRASCPTGLCLNTEGSFTCSACQSGYWVNEDGTACE). In terms of domain architecture, EGF-like 10; calcium-binding spans 1083–1124 (DLDECAFPGVCPTGVCTNTVGSFSCKDCDRGFRPSPLGNSCE). One can recognise an EGF-like 11; calcium-binding domain in the interval 1125-1165 (DVDECEGPQNSCLGGECKNTDGSYQCLCPQGFQLANGTVCE). Asn1160 carries an N-linked (GlcNAc...) asparagine glycan. The 42-residue stretch at 1166-1207 (DVDECVGEEHCAPHGECLNSPGSFFCLCAPGFASAEGGTRCQ) folds into the EGF-like 12; calcium-binding domain. The EGF-like 13; calcium-binding domain maps to 1208-1248 (DVDECATTEPCLGGHCVNTEGSFNCLCETGFQPAPDSGECV). The EGF-like 15; calcium-binding domain maps to 1249 to 1290 (DIDECANDTVCGNHGFCDNTDGSFRCLCDQGFETSPSGWECV). The N-linked (GlcNAc...) asparagine glycan is linked to Asn1255. The 43-residue stretch at 1291–1333 (DVNECELMLAVCGDALCENVEGSFLCLCASDLEEYDAEEGHCR) folds into the EGF-like 16; calcium-binding domain. One can recognise a TB 3 domain in the interval 1357 to 1409 (MECYAEHNGGPPCSQILGQNSTQAECCSTQGARWGETCDPCPSEDSVEFSELC). An N-linked (GlcNAc...) asparagine glycan is attached at Asn1376. Residues 1431–1473 (DADECILFGPALCQNGRCLNTVPGYICLCNPGYHYDAVSRKCQ) form the EGF-like 17; calcium-binding domain. In terms of domain architecture, EGF-like 18; calcium-binding spans 1474 to 1513 (DHNECQDLACENGECVNTEGSFHCFCSPPLILDLSGQRCV). N-linked (GlcNAc...) asparagine glycosylation occurs at Asn1514. Positions 1530 to 1582 (DICWKKVTNDVCSQPLRGHHTTYTECCCQDGEAWSQQCALCPPRSSEVYAQLC) constitute a TB 4 domain. 10 disulfide bridges follow: Cys1532-Cys1555, Cys1541-Cys1567, Cys1556-Cys1570, Cys1557-Cys1582, Cys1680-Cys1691, Cys1686-Cys1700, Cys1702-Cys1715, Cys1721-Cys1736, Cys1731-Cys1745, and Cys1747-Cys1760. The interval 1585–1764 (ARIEAEREAG…PGPPHCAAKE (180 aa)) is C-terminal domain. The region spanning 1676-1716 (QAEECGILNGCENGRCVRVREGYTCDCFEGFQLDTALMACV) is the EGF-like 19; calcium-binding domain. An EGF-like 20; calcium-binding domain is found at 1717–1761 (DVNECEDLNGAARLCAHGHCENTEGSYRCHCSPGYVAEPGPPHCA).

Belongs to the LTBP family. In terms of assembly, forms part of the large latent transforming growth factor beta precursor complex; removal is essential for activation of complex. Interacts with SDC4. Interacts (via C-terminal domain) with FBN1 (via N-terminal domain) in a Ca(+2)-dependent manner. In terms of processing, N-Glycosylated. Contains hydroxylated asparagine residues. Expressed in cortical astrocytes and glioma cells. Expression is up-regulated by TGFB1.

The protein resides in the secreted. Its subcellular location is the extracellular space. The protein localises to the extracellular matrix. Its function is as follows. May play an integral structural role in elastic-fiber architectural organization and/or assembly. The sequence is that of Latent-transforming growth factor beta-binding protein 2 (Ltbp2) from Rattus norvegicus (Rat).